The sequence spans 33 residues: Phospholipase A2 homolog BmarPLA2 (33 aa).

Belongs to the phospholipase A2 family. Group II subfamily. K49 sub-subfamily. As to quaternary structure, homodimer; non-covalently linked. In terms of tissue distribution, expressed by the venom gland.

It is found in the secreted. Functionally, snake phospholipase A2 homolog that lacks enzymatic activity. May display myotoxin activity. In isolated heart decreases cardiac frequency. Also decreases mean arterial pressure. Does not show antimicrobial activity. Does not change renal parameters (such as perfusion pressure, renal vascular resistance, urinary flow, glomerular filtration rate and sodium tubular transport). The chain is Phospholipase A2 homolog BmarPLA2 from Bothrops marajoensis (Marajo lancehead).